Here is a 332-residue protein sequence, read N- to C-terminus: T-cell leukemia homeobox protein 1 (332 aa).

The segment at residues Lys203–Thr262 is a DNA-binding region (homeobox). Lys238 bears the N6-acetyllysine mark.

As to expression, expressed in various embryonic tissues, including branchial arches, some component of the nervous system and spleen.

The protein resides in the nucleus. Controls the genesis of the spleen. Binds to the DNA sequence 5'-GGCGGTAAGTGG-3'. This is T-cell leukemia homeobox protein 1 (Tlx1) from Mus musculus (Mouse).